Reading from the N-terminus, the 575-residue chain is Thrombomodulin (575 aa).

Residues 1–18 (MLGVLVLGALALAGLGFP) form the signal peptide. At 19-515 (APAEPQPGGS…TPPAVGLVHS (497 aa)) the chain is on the extracellular side. Residues 31-169 (VEHDCFALYP…VKADGFLCEF (139 aa)) enclose the C-type lectin domain. N-linked (GlcNAc...) asparagine glycosylation is found at N47, N115, and N116. Cystine bridges form between C137–C158, C245–C256, C252–C265, C267–C280, C288–C296, C292–C308, C310–C323, C329–C340, C336–C349, C351–C362, C369–C378, C374–C388, C390–C404, C408–C413, C417–C425, C427–C439, C445–C455, C451–C464, and C466–C480. EGF-like domains lie at 241–281 (GAWD…RSCT) and 284–324 (ATQS…HRCE). The 39-residue stretch at 325 to 363 (DVDDCILEPSPCPQRCVNTQGGFECHCYPNYDLVDGECV) folds into the EGF-like 3; calcium-binding domain. N342 is modified ((3R)-3-hydroxyasparagine). 2 consecutive EGF-like domains span residues 365 to 405 (PVDP…HRCQ) and 404 to 440 (CQMF…FICT). An N-linked (GlcNAc...) asparagine glycan is attached at N382. An N-linked (GlcNAc...) asparagine glycan is attached at N409. The 41-residue stretch at 441–481 (DIDECENGGFCSGVCHNLPGTFECICGPDSALARHIGTDCD) folds into the EGF-like 6; calcium-binding domain. The tract at residues 481 to 515 (DSGKVDGGDSGSGEPPPSPTPGSTLTPPAVGLVHS) is involved in alpha-L/beta-2 and alpha-M/beta-2 integrin binding. The interval 484 to 506 (KVDGGDSGSGEPPPSPTPGSTLT) is disordered. S490 and S492 each carry an O-linked (Xyl...) (chondroitin sulfate) serine glycan. A helical transmembrane segment spans residues 516–539 (GLLIGISIASLCLVVALLALLCHL). At 540–575 (RKKQGAARAKMEYKCAAPSKEVVLQHVRTERTPQRL) the chain is on the cytoplasmic side.

In terms of assembly, interacts with ITGAL, ITGAM and ITGB2. Interacts with thrombin/F2; this interaction switches the specificity of thrombin from a procoagulant to an anticoagulant and antifibrinolytic protease. Interacts with ANGP1 and ANGP2; these interactions significantly inhibit the generation of activated PC and TAFIa/CPB2 by the thrombin/thrombomodulin complex. Interacts with PF4; this interaction enhances generation of activated protein C. Interacts with HMGB1; this interaction inhibits HMGB1 inflammatory activity. Post-translationally, N-glycosylated. The iron and 2-oxoglutarate dependent 3-hydroxylation of aspartate and asparagine is (R) stereospecific within EGF domains. As to expression, endothelial cells are unique in synthesizing thrombomodulin.

The protein localises to the membrane. Endothelial cell receptor that plays a critical role in regulating several physiological processes including hemostasis, coagulation, fibrinolysis, inflammation, and angiogenesis. Acts as a cofactor for thrombin activation of protein C/PROC on the surface of vascular endothelial cells leading to initiation of the activated protein C anticoagulant pathway. Also accelerates the activation of the plasma carboxypeptidase B2/CPB2, which catalyzes removal of C-terminal basic amino acids from its substrates including kinins or anaphylatoxins leading to fibrinolysis inhibition. Plays critical protective roles in changing the cleavage specificity of protease-activated receptor 1/PAR1, inhibiting endothelial cell permeability and inflammation. Suppresses inflammation distinctly from its anticoagulant cofactor activity by sequestering HMGB1 thereby preventing it from engaging cellular receptors such as RAGE and contributing to the inflammatory response. The chain is Thrombomodulin (THBD) from Homo sapiens (Human).